A 121-amino-acid polypeptide reads, in one-letter code: Two-component response regulator ORR13 (121 aa).

A Response regulatory domain is found at 5 to 121 (HVLVVDDTHV…ADVPRILNYI (117 aa)). 4-aspartylphosphate is present on Asp-55.

The protein belongs to the ARR family. Type-A subfamily. Two-component system major event consists of a His-to-Asp phosphorelay between a sensor histidine kinase (HK) and a response regulator (RR). In plants, the His-to-Asp phosphorelay involves an additional intermediate named Histidine-containing phosphotransfer protein (HPt). This multistep phosphorelay consists of a His-Asp-His-Asp sequential transfer of a phosphate group between first a His and an Asp of the HK protein, followed by the transfer to a conserved His of the HPt protein and finally the transfer to an Asp in the receiver domain of the RR protein. As to expression, expressed in flowers and panicles.

Its function is as follows. Functions as a response regulator involved in His-to-Asp phosphorelay signal transduction system. Phosphorylation of the Asp residue in the receiver domain activates the ability of the protein to promote the transcription of target genes. Type-A response regulators seem to act as negative regulators of the cytokinin signaling. The protein is Two-component response regulator ORR13 of Oryza sativa subsp. japonica (Rice).